We begin with the raw amino-acid sequence, 151 residues long: Urease accessory protein UreE (151 aa).

This sequence belongs to the UreE family.

It is found in the cytoplasm. In terms of biological role, involved in urease metallocenter assembly. Binds nickel. Probably functions as a nickel donor during metallocenter assembly. The chain is Urease accessory protein UreE from Bacillus cereus (strain ATCC 10987 / NRS 248).